A 970-amino-acid chain; its full sequence is Phosphoenolpyruvate carboxylase 1 (970 aa).

Ser-15 is subject to Phosphoserine. Residues His-177, Lys-606, and Arg-647 contribute to the active site.

This sequence belongs to the PEPCase type 1 family. In terms of assembly, homotetramer. It depends on Mg(2+) as a cofactor.

Its subcellular location is the cytoplasm. It carries out the reaction oxaloacetate + phosphate = phosphoenolpyruvate + hydrogencarbonate. It participates in photosynthesis; C4 acid pathway. Its activity is regulated as follows. By light-reversible phosphorylation. Functionally, through the carboxylation of phosphoenolpyruvate (PEP) it forms oxaloacetate, a four-carbon dicarboxylic acid source for the tricarboxylic acid cycle. In Zea mays (Maize), this protein is Phosphoenolpyruvate carboxylase 1 (PEP1).